A 437-amino-acid chain; its full sequence is Serine--tRNA ligase (437 aa).

227-229 (TAE) is an L-serine binding site. Residues 258 to 260 (RSE) and V274 contribute to the ATP site. E281 contacts L-serine. 347-350 (ETHS) serves as a coordination point for ATP. T382 serves as a coordination point for L-serine.

This sequence belongs to the class-II aminoacyl-tRNA synthetase family. Type-1 seryl-tRNA synthetase subfamily. As to quaternary structure, homodimer. The tRNA molecule binds across the dimer.

It localises to the cytoplasm. The enzyme catalyses tRNA(Ser) + L-serine + ATP = L-seryl-tRNA(Ser) + AMP + diphosphate + H(+). It catalyses the reaction tRNA(Sec) + L-serine + ATP = L-seryl-tRNA(Sec) + AMP + diphosphate + H(+). Its pathway is aminoacyl-tRNA biosynthesis; selenocysteinyl-tRNA(Sec) biosynthesis; L-seryl-tRNA(Sec) from L-serine and tRNA(Sec): step 1/1. Catalyzes the attachment of serine to tRNA(Ser). Is also able to aminoacylate tRNA(Sec) with serine, to form the misacylated tRNA L-seryl-tRNA(Sec), which will be further converted into selenocysteinyl-tRNA(Sec). The sequence is that of Serine--tRNA ligase from Deinococcus geothermalis (strain DSM 11300 / CIP 105573 / AG-3a).